Reading from the N-terminus, the 249-residue chain is Methylthioribulose-1-phosphate dehydratase (249 aa).

Residues His-103 and His-105 each contribute to the Zn(2+) site.

It belongs to the aldolase class II family. MtnB subfamily. The cofactor is Zn(2+).

The catalysed reaction is 5-(methylsulfanyl)-D-ribulose 1-phosphate = 5-methylsulfanyl-2,3-dioxopentyl phosphate + H2O. It functions in the pathway amino-acid biosynthesis; L-methionine biosynthesis via salvage pathway; L-methionine from S-methyl-5-thio-alpha-D-ribose 1-phosphate: step 2/6. Functionally, catalyzes the dehydration of methylthioribulose-1-phosphate (MTRu-1-P) into 2,3-diketo-5-methylthiopentyl-1-phosphate (DK-MTP-1-P). This chain is Methylthioribulose-1-phosphate dehydratase, found in Leptospira interrogans serogroup Icterohaemorrhagiae serovar Lai (strain 56601).